Here is a 269-residue protein sequence, read N- to C-terminus: Nitrogen regulatory protein DAL80 (269 aa).

A GATA-type zinc finger spans residues 31–55; that stretch reads CQNCFTVKTPLWRRDEHGTVLCNAC.

It localises to the nucleus. Functionally, negative regulator of multiple nitrogen catabolic genes including the allantoin pathway genes. The sequence is that of Nitrogen regulatory protein DAL80 (DAL80) from Saccharomyces cerevisiae (strain ATCC 204508 / S288c) (Baker's yeast).